The sequence spans 205 residues: Ribosomal RNA small subunit methyltransferase G (205 aa).

S-adenosyl-L-methionine contacts are provided by residues Gly-70, Leu-75, 124-125 (IE), and Arg-138.

This sequence belongs to the methyltransferase superfamily. RNA methyltransferase RsmG family.

It localises to the cytoplasm. The enzyme catalyses guanosine(527) in 16S rRNA + S-adenosyl-L-methionine = N(7)-methylguanosine(527) in 16S rRNA + S-adenosyl-L-homocysteine. Specifically methylates the N7 position of guanine in position 527 of 16S rRNA. The protein is Ribosomal RNA small subunit methyltransferase G of Ruegeria sp. (strain TM1040) (Silicibacter sp.).